We begin with the raw amino-acid sequence, 125 residues long: Holo-[acyl-carrier-protein] synthase (125 aa).

D8 and E57 together coordinate Mg(2+).

This sequence belongs to the P-Pant transferase superfamily. AcpS family. It depends on Mg(2+) as a cofactor.

The protein localises to the cytoplasm. It catalyses the reaction apo-[ACP] + CoA = holo-[ACP] + adenosine 3',5'-bisphosphate + H(+). Functionally, transfers the 4'-phosphopantetheine moiety from coenzyme A to a Ser of acyl-carrier-protein. This chain is Holo-[acyl-carrier-protein] synthase, found in Halothermothrix orenii (strain H 168 / OCM 544 / DSM 9562).